The primary structure comprises 418 residues: Actin-related protein 3 (418 aa).

Residue alanine 2 is modified to N-acetylalanine. An N6-acetyllysine mark is found at lysine 240, lysine 244, lysine 251, and lysine 254.

It belongs to the actin family. ARP3 subfamily. Component of the Arp2/3 complex composed of ACTR2/ARP2, ACTR3/ARP3, ARPC1B/p41-ARC, ARPC2/p34-ARC, ARPC3/p21-ARC, ARPC4/p20-ARC and ARPC5/p16-ARC. Interacts with WHDC1. Interacts weakly with MEFV. Interacts with AVIL. As to quaternary structure, (Microbial infection) Interacts with bacterium B.thailandensis BimA.

It is found in the cytoplasm. The protein resides in the cytoskeleton. Its subcellular location is the cell projection. The protein localises to the nucleus. In terms of biological role, ATP-binding component of the Arp2/3 complex, a multiprotein complex that mediates actin polymerization upon stimulation by nucleation-promoting factor (NPF). The Arp2/3 complex mediates the formation of branched actin networks in the cytoplasm, providing the force for cell motility. Seems to contact the pointed end of the daughter actin filament. In podocytes, required for the formation of lamellipodia downstream of AVIL and PLCE1 regulation. In addition to its role in the cytoplasmic cytoskeleton, the Arp2/3 complex also promotes actin polymerization in the nucleus, thereby regulating gene transcription and repair of damaged DNA. The Arp2/3 complex promotes homologous recombination (HR) repair in response to DNA damage by promoting nuclear actin polymerization, leading to drive motility of double-strand breaks (DSBs). Plays a role in ciliogenesis. This is Actin-related protein 3 (Actr3) from Mus musculus (Mouse).